The primary structure comprises 414 residues: GLABROUS1 enhancer-binding protein-like 3 (414 aa).

Disordered stretches follow at residues 36 to 57 and 167 to 191; these read QLRT…LSSS and QAKD…DRDV. A compositionally biased stretch (low complexity) spans 38 to 50; the sequence is RTTTTRTTTTRTT. The interval 382-403 is non-canonical leucine-zipper; sequence LINEWKALFVDEQRLCVKKLTF.

Belongs to the GeBP family. Homo- and heterodimers. Interacts with GEBP, GPL1 and GPL2. Interacts with GEBP. Expressed in the apical meristem and young leaf primordia. Detected in the vascular tissues of rosette leaves, in primary and secondary roots and at the base of flowers and siliques.

Its subcellular location is the nucleus. Functionally, probable transcription factor. Involved in stress responses. Plays a repressive role in cell expansion by counteracting the positive role of CPR5 in this process, but does not regulate cell proliferation or endoreduplication. The chain is GLABROUS1 enhancer-binding protein-like 3 from Arabidopsis thaliana (Mouse-ear cress).